Consider the following 1017-residue polypeptide: Adhesion G-protein coupled receptor G2 (1017 aa).

Residues 1–37 (MVFSVRQCGHVGRTEEVLLTFKIFLVIICLHVVLVTS) form the signal peptide. Residues 38–627 (LEEDTDNSSL…TSVLPAQMMA (590 aa)) lie on the Extracellular side of the membrane. 9 N-linked (GlcNAc...) asparagine glycosylation sites follow: N44, N85, N99, N111, N117, N144, N162, N186, and N194. Positions 301–366 (PLSPQPSAPI…NTTSAPPVQT (66 aa)) are disordered. Residues 308 to 320 (APIASSPAIDMPP) show a composition bias toward low complexity. 2 stretches are compositionally biased toward polar residues: residues 321 to 335 (QSET…THVS) and 344 to 366 (SFSS…PVQT). 11 N-linked (GlcNAc...) asparagine glycosylation sites follow: N357, N370, N435, N438, N456, N461, N528, N542, N547, N551, and N597. Positions 462–619 (TTTFVAQDPA…GVLLDLSRTS (158 aa)) constitute a GAIN-B domain. 2 disulfides stabilise this stretch: C570–C601 and C589–C603. Residues 570–619 (CVFWDLGRNGGRGGWSDNGCSVKDRRLNETICTCSHLTSFGVLLDLSRTS) are GPS. The segment at 608–619 (SFGVLLDLSRTS) is stachel. Residues 628–648 (LTFITYIGCGLSSIFLSVTLV) traverse the membrane as a helical segment. Residues 649-667 (TYIAFEKIRRDYPSKILIQ) lie on the Cytoplasmic side of the membrane. The chain crosses the membrane as a helical span at residues 668-688 (LCAALLLLNLVFLLDSWIALY). Residues 689-693 (KMQGL) are Extracellular-facing. Residues 694-714 (CISVAVFLHYFLLVSFTWMGL) form a helical membrane-spanning segment. A disulfide bridge links C694 with C778. The Cytoplasmic segment spans residues 715-737 (EAFHMYLALVKVFNTYIRKYILK). Residues 738 to 758 (FCIVGWGVPAVVVTIILTISP) form a helical membrane-spanning segment. The Extracellular segment spans residues 759 to 789 (DNYGLGSYGKFPNGSPDDFCWINNNAVFYIT). A helical membrane pass occupies residues 790–810 (VVGYFCVIFLLNVSMFIVVLV). The Cytoplasmic segment spans residues 811-834 (QLCRIKKKKQLGAQRKTSIQDLRS). A helical membrane pass occupies residues 835–855 (IAGLTFLLGITWGFAFFAWGP). Over 856–857 (VN) the chain is Extracellular. N-linked (GlcNAc...) asparagine glycosylation is present at N857. The chain crosses the membrane as a helical span at residues 858–878 (VTFMYLFAIFNTLQGFFIFIF). N868 lines the 3beta-hydroxyandrost-5-en-17-one pocket. At 879–1017 (YCVAKENVRK…RGSLHFIEQM (139 aa)) the chain is on the cytoplasmic side. A disordered region spans residues 918–939 (QTVNQGVSSSSNSLQSSSNSTN). S1010 carries the phosphoserine modification.

Belongs to the G-protein coupled receptor 2 family. Adhesion G-protein coupled receptor (ADGR) subfamily. Heterodimer of 2 chains generated by proteolytic processing; the large extracellular N-terminal fragment and the membrane-bound C-terminal fragment predominantly remain associated and non-covalently linked. Interacts with CFTR. Proteolytically cleaved into 2 subunits, an extracellular subunit and a seven-transmembrane subunit. Post-translationally, highly glycosylated. In terms of tissue distribution, epididymis-specific expression (at protein level). Both subunits are associated with apical membranes of efferent ductule and proximal epididymal duct epithelia. Mainly expressed in the nonciliated principal cells of the proximal excurrent ducts. Specifically over-expressed in Ewing sarcomas but also up-regulated in a number of carcinomas derived from prostate, kidney or lung.

The protein resides in the apical cell membrane. Forms a heterodimer of 2 chains generated by proteolytic processing that remain associated through non-covalent interactions mediated by the GAIN-B domain. In the inactivated receptor, the Stachel sequence (also named stalk) is embedded in the GAIN-B domain, where it adopts a beta-strand conformation. On activation, the Stachel moves into the 7 transmembrane region and adopts a twisted hook-shaped configuration that forms contacts within the receptor, leading to coupling of a G-alpha protein, which activates signaling. The cleaved GAIN-B and N-terminal domains can then dissociate from the rest of the receptor. Deoxycorticosterone (DOC) acts as an antagonist of ADGRG2. In terms of biological role, adhesion G-protein coupled receptor (aGPCR) for steroid hormones, such as dehydroepiandrosterone (DHEA; also named 3beta-hydroxyandrost-5-en-17-one) and androstenedione. Involved in a signal transduction pathway controlling epididymal function and male fertility. Ligand binding causes a conformation change that triggers signaling via guanine nucleotide-binding proteins (G proteins) and modulates the activity of downstream effectors, such as adenylate cyclase. ADGRG2 is coupled to G(s) G proteins and mediates activation of adenylate cyclase activity. Also able to couple with G(q) G proteins in vitro. Together with CFTR, required to promote fluid reabsorption within efferent ductule. The sequence is that of Adhesion G-protein coupled receptor G2 from Homo sapiens (Human).